We begin with the raw amino-acid sequence, 304 residues long: Acetaldehyde dehydrogenase 1 (304 aa).

Cys-131 (acyl-thioester intermediate) is an active-site residue. NAD(+) contacts are provided by residues 162-170 (SAGPGTRKN) and Asn-273.

It belongs to the acetaldehyde dehydrogenase family.

It carries out the reaction acetaldehyde + NAD(+) + CoA = acetyl-CoA + NADH + H(+). In Dechloromonas aromatica (strain RCB), this protein is Acetaldehyde dehydrogenase 1.